The sequence spans 252 residues: MDFFWERMLNDPQNHFSDDQKEFLNHAKYRVKRNTIFGMLVGFSLPLYLARNKKVTPIRLYATSIIGGLAGNGVAQITTLAYNLSAIRQRDDGFEILRKIQDSLIRQRTTMRQGRFPSSSSEFPPKNSKYQLPGSMPNTGASSSQDPFTNSQSTEKEDAMYSKDNGFEDRSKPASAWEAIRNRNRNTGNNSFPFYEEDSSVKSTDSAFSGQENSEAFPSRTSNLGSEQLDEPISHEQEAFDQLIWNDSSSSK.

Polar residues-rich tracts occupy residues 108–122 (RTTMRQGRFPSSSSE) and 136–153 (MPNTGASSSQDPFTNSQS). The segment at 108–252 (RTTMRQGRFP…LIWNDSSSSK (145 aa)) is disordered. A compositionally biased stretch (basic and acidic residues) spans 154–172 (TEKEDAMYSKDNGFEDRSK). The span at 201 to 226 (VKSTDSAFSGQENSEAFPSRTSNLGS) shows a compositional bias: polar residues.

Its subcellular location is the cytoplasm. It is found in the mitochondrion. It localises to the nucleus. This is an uncharacterized protein from Schizosaccharomyces pombe (strain 972 / ATCC 24843) (Fission yeast).